We begin with the raw amino-acid sequence, 211 residues long: Uracil phosphoribosyltransferase (211 aa).

Residues Arg78, Arg103, and 130-138 (DPMLATGGT) contribute to the 5-phospho-alpha-D-ribose 1-diphosphate site. Residues Ile195 and 200–202 (GDA) contribute to the uracil site. Asp201 contributes to the 5-phospho-alpha-D-ribose 1-diphosphate binding site.

It belongs to the UPRTase family. Mg(2+) serves as cofactor.

The catalysed reaction is UMP + diphosphate = 5-phospho-alpha-D-ribose 1-diphosphate + uracil. It functions in the pathway pyrimidine metabolism; UMP biosynthesis via salvage pathway; UMP from uracil: step 1/1. Its activity is regulated as follows. Allosterically activated by GTP. Functionally, catalyzes the conversion of uracil and 5-phospho-alpha-D-ribose 1-diphosphate (PRPP) to UMP and diphosphate. The protein is Uracil phosphoribosyltransferase of Streptomyces coelicolor (strain ATCC BAA-471 / A3(2) / M145).